We begin with the raw amino-acid sequence, 340 residues long: NADH-quinone oxidoreductase subunit H 2 (340 aa).

8 helical membrane-spanning segments follow: residues 10–30 (LIVA…ILLL), 84–104 (FLFK…FVAI), 126–146 (VALL…IFGG), 172–192 (MGFA…LDIV), 198–218 (VWNI…GLAE), 255–275 (VIVL…WNGI), 279–299 (MPPL…FIWF), and 318–338 (VLLP…GAAA).

This sequence belongs to the complex I subunit 1 family. NDH-1 is composed of 14 different subunits. Subunits NuoA, H, J, K, L, M, N constitute the membrane sector of the complex.

It localises to the cell inner membrane. The enzyme catalyses a quinone + NADH + 5 H(+)(in) = a quinol + NAD(+) + 4 H(+)(out). Functionally, NDH-1 shuttles electrons from NADH, via FMN and iron-sulfur (Fe-S) centers, to quinones in the respiratory chain. The immediate electron acceptor for the enzyme in this species is believed to be ubiquinone. Couples the redox reaction to proton translocation (for every two electrons transferred, four hydrogen ions are translocated across the cytoplasmic membrane), and thus conserves the redox energy in a proton gradient. This subunit may bind ubiquinone. This Rhizobium etli (strain ATCC 51251 / DSM 11541 / JCM 21823 / NBRC 15573 / CFN 42) protein is NADH-quinone oxidoreductase subunit H 2.